A 324-amino-acid chain; its full sequence is MIFSKISQVAHYVPQQLVTNNDLASIMDTSHEWIFSRTGIAERHISRDEMTSDLAIQVADQLLTQSGLKADAIDFIIVATISPDATMPSTAAKVQAAIAATSAFAFDMTAACSGFVFALAMADKLIASGAYQNGMVIGAETLSKLVNWQDRATAVLFGDGAGGVLLEASKDKHVLAETLHTDGARCQSLISGETSLSSPYSIGKKAIATIQMDGRAIFDFAIRDVSKSILTLMAQSDITKDDIDYCLLHQANRRILDKIARKIDVPREKFLENMMRYGNTSAASIPILLSEAVQKGQIRLDGTQKILLSGFGGGLTWGSLIVRI.

Residues C112 and H249 contribute to the active site. The interval 250-254 (QANRR) is ACP-binding. Residue N279 is part of the active site.

Belongs to the thiolase-like superfamily. FabH family. Homodimer.

Its subcellular location is the cytoplasm. The catalysed reaction is malonyl-[ACP] + acetyl-CoA + H(+) = 3-oxobutanoyl-[ACP] + CO2 + CoA. The protein operates within lipid metabolism; fatty acid biosynthesis. Its function is as follows. Catalyzes the condensation reaction of fatty acid synthesis by the addition to an acyl acceptor of two carbons from malonyl-ACP. Catalyzes the first condensation reaction which initiates fatty acid synthesis and may therefore play a role in governing the total rate of fatty acid production. Possesses both acetoacetyl-ACP synthase and acetyl transacylase activities. Its substrate specificity determines the biosynthesis of branched-chain and/or straight-chain of fatty acids. This Streptococcus pyogenes serotype M1 protein is Beta-ketoacyl-[acyl-carrier-protein] synthase III.